A 210-amino-acid polypeptide reads, in one-letter code: Probable nicotinate-nucleotide adenylyltransferase (210 aa).

Belongs to the NadD family.

The enzyme catalyses nicotinate beta-D-ribonucleotide + ATP + H(+) = deamido-NAD(+) + diphosphate. The protein operates within cofactor biosynthesis; NAD(+) biosynthesis; deamido-NAD(+) from nicotinate D-ribonucleotide: step 1/1. Functionally, catalyzes the reversible adenylation of nicotinate mononucleotide (NaMN) to nicotinic acid adenine dinucleotide (NaAD). The polypeptide is Probable nicotinate-nucleotide adenylyltransferase (Streptococcus pyogenes serotype M18 (strain MGAS8232)).